The following is a 205-amino-acid chain: DUF724 domain-containing protein 4 (205 aa).

The disordered stretch occupies residues 28-59 (DASGRGKRRRVEQEHHSDLNNETAAPTGGSAG). A DUF724 domain is found at 63–189 (VLPFTKTLAS…MADDYSKLKK (127 aa)).

Expressed in roots, leaves, stems, flowers and siliques.

The protein resides in the nucleus. May be involved in the polar growth of plant cells via transportation of RNAs. In Arabidopsis thaliana (Mouse-ear cress), this protein is DUF724 domain-containing protein 4.